A 128-amino-acid polypeptide reads, in one-letter code: Ribonuclease P protein component (128 aa).

It belongs to the RnpA family. As to quaternary structure, consists of a catalytic RNA component (M1 or rnpB) and a protein subunit.

It carries out the reaction Endonucleolytic cleavage of RNA, removing 5'-extranucleotides from tRNA precursor.. In terms of biological role, RNaseP catalyzes the removal of the 5'-leader sequence from pre-tRNA to produce the mature 5'-terminus. It can also cleave other RNA substrates such as 4.5S RNA. The protein component plays an auxiliary but essential role in vivo by binding to the 5'-leader sequence and broadening the substrate specificity of the ribozyme. The chain is Ribonuclease P protein component from Prochlorococcus marinus (strain MIT 9301).